The following is a 768-amino-acid chain: Cullin-3 (768 aa).

Residues 677–698 (VAAKQGESDPERKETRQKVDDD) form a disordered region. Residues 682-698 (GESDPERKETRQKVDDD) show a composition bias toward basic and acidic residues. The Cullin neddylation domain occupies 698–760 (DRKHEIEAAI…REYLARTPED (63 aa)). Residue Lys-712 forms a Glycyl lysine isopeptide (Lys-Gly) (interchain with G-Cter in NEDD8) linkage.

Belongs to the cullin family. Component of multiple BCR (BTB-CUL3-RBX1) E3 ubiquitin-protein ligase complexes formed of cul3, rbx1 and a variable BTB domain-containing protein acting as both, adapter to cullin and substrate recognition subunit. Interacts with btbd6. In terms of processing, neddylated. Attachment of NEDD8 is required for the E3 ubiquitin-protein ligase activity of the SCF-like complex.

It localises to the nucleus. It functions in the pathway protein modification; protein ubiquitination. In terms of biological role, probable core component of cullin-based SCF-like E3 ubiquitin-protein ligase complexes which mediate the ubiquitination and subsequent proteasomal degradation of target proteins. The E3 ubiquitin-protein ligase activity of the complex is dependent on the neddylation of the cullin subunit. Involved in ER-Golgi transport by regulating the size of COPII coats, thereby playing a key role in collagen export, which is required for embryonic stem (ES) cells division. May play a role in the regulation of mittotic entry via ubiquitination of aurka. This is Cullin-3 (cul3) from Xenopus tropicalis (Western clawed frog).